The sequence spans 132 residues: Holo-[acyl-carrier-protein] synthase (132 aa).

Mg(2+)-binding residues include D8 and E57.

The protein belongs to the P-Pant transferase superfamily. AcpS family. Mg(2+) is required as a cofactor.

The protein localises to the cytoplasm. The enzyme catalyses apo-[ACP] + CoA = holo-[ACP] + adenosine 3',5'-bisphosphate + H(+). Transfers the 4'-phosphopantetheine moiety from coenzyme A to a Ser of acyl-carrier-protein. The polypeptide is Holo-[acyl-carrier-protein] synthase (Methylobacterium nodulans (strain LMG 21967 / CNCM I-2342 / ORS 2060)).